Here is a 202-residue protein sequence, read N- to C-terminus: Large ribosomal subunit protein bL25 (202 aa).

Positions 180–202 are disordered; that stretch reads PKQEAFEEDAEPSPGEEPEGENQ. Residues 185 to 202 are compositionally biased toward acidic residues; sequence FEEDAEPSPGEEPEGENQ.

It belongs to the bacterial ribosomal protein bL25 family. CTC subfamily. As to quaternary structure, part of the 50S ribosomal subunit; part of the 5S rRNA/L5/L18/L25 subcomplex. Contacts the 5S rRNA. Binds to the 5S rRNA independently of L5 and L18.

Its function is as follows. This is one of the proteins that binds to the 5S RNA in the ribosome where it forms part of the central protuberance. In Bacillus velezensis (strain DSM 23117 / BGSC 10A6 / LMG 26770 / FZB42) (Bacillus amyloliquefaciens subsp. plantarum), this protein is Large ribosomal subunit protein bL25.